Reading from the N-terminus, the 152-residue chain is uncharacterized protein (152 aa).

This is an uncharacterized protein from Rickettsia prowazekii (strain Madrid E).